The primary structure comprises 547 residues: Glucose-6-phosphate isomerase 2 (547 aa).

Residue E351 is the Proton donor of the active site. Active-site residues include H382 and K508.

It belongs to the GPI family.

It is found in the cytoplasm. It catalyses the reaction alpha-D-glucose 6-phosphate = beta-D-fructose 6-phosphate. Its pathway is carbohydrate biosynthesis; gluconeogenesis. The protein operates within carbohydrate degradation; glycolysis; D-glyceraldehyde 3-phosphate and glycerone phosphate from D-glucose: step 2/4. Catalyzes the reversible isomerization of glucose-6-phosphate to fructose-6-phosphate. This chain is Glucose-6-phosphate isomerase 2, found in Neisseria meningitidis serogroup B (strain ATCC BAA-335 / MC58).